A 198-amino-acid polypeptide reads, in one-letter code: GTP cyclohydrolase-2 (198 aa).

Residue 52-56 (RMHSE) coordinates GTP. Positions 57, 68, and 70 each coordinate Zn(2+). Residues Gln-73, 94–96 (EGR), and Thr-116 each bind GTP. Asp-128 functions as the Proton acceptor in the catalytic mechanism. Arg-130 serves as the catalytic Nucleophile. Thr-151 and Lys-156 together coordinate GTP.

This sequence belongs to the GTP cyclohydrolase II family. Zn(2+) serves as cofactor.

The catalysed reaction is GTP + 4 H2O = 2,5-diamino-6-hydroxy-4-(5-phosphoribosylamino)-pyrimidine + formate + 2 phosphate + 3 H(+). The protein operates within cofactor biosynthesis; riboflavin biosynthesis; 5-amino-6-(D-ribitylamino)uracil from GTP: step 1/4. Its function is as follows. Catalyzes the conversion of GTP to 2,5-diamino-6-ribosylamino-4(3H)-pyrimidinone 5'-phosphate (DARP), formate and pyrophosphate. The chain is GTP cyclohydrolase-2 from Vibrio cholerae serotype O1 (strain ATCC 39315 / El Tor Inaba N16961).